A 185-amino-acid chain; its full sequence is 3-hydroxyanthranilate 3,4-dioxygenase (185 aa).

Arginine 44 contacts O2. The Fe cation site is built by histidine 48, glutamate 54, and histidine 95. Glutamate 54 contributes to the substrate binding site. Substrate-binding residues include arginine 99 and glutamate 109. Residues cysteine 124, cysteine 127, cysteine 161, and cysteine 164 each coordinate a divalent metal cation.

It belongs to the 3-HAO family. The cofactor is Fe(2+).

It localises to the cytoplasm. The enzyme catalyses 3-hydroxyanthranilate + O2 = (2Z,4Z)-2-amino-3-carboxymuconate 6-semialdehyde. It functions in the pathway cofactor biosynthesis; NAD(+) biosynthesis; quinolinate from L-kynurenine: step 3/3. In terms of biological role, catalyzes the oxidative ring opening of 3-hydroxyanthranilate to 2-amino-3-carboxymuconate semialdehyde, which spontaneously cyclizes to quinolinate. This is 3-hydroxyanthranilate 3,4-dioxygenase from Podospora anserina (strain S / ATCC MYA-4624 / DSM 980 / FGSC 10383) (Pleurage anserina).